The following is a 192-amino-acid chain: uncharacterized protein (192 aa).

Positions 1–17 (MFKKILFPLVALFMLAG) are cleaved as a signal peptide. C18 carries the N-palmitoyl cysteine lipid modification. C18 is lipidated: S-diacylglycerol cysteine.

It to H.influenzae HI_0162.

Its subcellular location is the cell membrane. This is an uncharacterized protein from Escherichia coli O6:H1 (strain CFT073 / ATCC 700928 / UPEC).